The sequence spans 612 residues: Cytoplasmic dynein 1 intermediate chain 2 (612 aa).

2 stretches are compositionally biased toward basic and acidic residues: residues 1–13 (MSDK…ELER) and 20–43 (QIRE…KKEA). Residues 1–188 (MSDKSDLKAE…PHELTEEEKQ (188 aa)) are disordered. S2 carries the N-acetylserine modification. S51 bears the Diphosphoserine mark. Phosphoserine is present on residues S51 and S84. Low complexity predominate over residues 82-91 (PSSKSVSTPS). T89 is subject to Phosphothreonine. Residues S91, S95, and S98 each carry the phosphoserine modification. Basic and acidic residues predominate over residues 164–188 (EKTLKKDEENDSKAPPHELTEEEKQ). WD repeat units follow at residues 251 to 300 (SKHR…TTPE), 304 to 344 (HCQS…RTPV), 353 to 394 (AHTH…HPQD), 403 to 443 (SKAV…AGIS), 448 to 493 (GHQG…PLYS), 496 to 536 (DNSD…EVPT), and 542 to 581 (EGNP…AVPR).

Belongs to the dynein intermediate chain family. In terms of assembly, homodimer. The cytoplasmic dynein 1 complex consists of two catalytic heavy chains (HCs) and a number of non-catalytic subunits presented by intermediate chains (ICs), light intermediate chains (LICs) and light chains (LCs); the composition seems to vary in respect to the IC, LIC and LC composition. The heavy chain homodimer serves as a scaffold for the probable homodimeric assembly of the respective non-catalytic subunits. The ICs and LICs bind directly to the HC dimer and the LCs assemble on the IC dimer. Interacts with DYNLT3. Interacts with DYNLT1. Interacts (dephosphorylated at Ser-84) with DCTN1. Interacts with BICD2. Interacts with SPEF2. Interacts with CFAP61. The phosphorylation status of Ser-84 appears to be involved in dynactin-dependent target binding. Post-translationally, pyrophosphorylation by 5-diphosphoinositol pentakisphosphate (5-IP7) promotes interaction with DCTN1. Serine pyrophosphorylation is achieved by Mg(2+)-dependent, but enzyme independent transfer of a beta-phosphate from a inositol pyrophosphate to a pre-phosphorylated serine residue.

It localises to the cytoplasm. It is found in the cytoskeleton. In terms of biological role, acts as one of several non-catalytic accessory components of the cytoplasmic dynein 1 complex that are thought to be involved in linking dynein to cargos and to adapter proteins that regulate dynein function. Cytoplasmic dynein 1 acts as a motor for the intracellular retrograde motility of vesicles and organelles along microtubules. The intermediate chains mediate the binding of dynein to dynactin via its 150 kDa component (p150-glued) DCTN1. Involved in membrane-transport, such as Golgi apparatus, late endosomes and lysosomes. This chain is Cytoplasmic dynein 1 intermediate chain 2 (Dync1i2), found in Mus musculus (Mouse).